Here is a 133-residue protein sequence, read N- to C-terminus: Secretin (133 aa).

Positions 1-22 are cleaved as a signal peptide; the sequence is MEPPLPTPMLLLLLLLLSSSAA. A propeptide spanning residues 23-30 is cleaved from the precursor; the sequence is LPAPPRTP. Val58 carries the valine amide modification. Ser62 is subject to Phosphoserine. Residues 62–133 constitute a propeptide that is removed on maturation; sequence SEQDTENIPE…EWTETTRPPR (72 aa).

This sequence belongs to the glucagon family. As to expression, highly expressed in the intestine. Also expressed in the hippocampus, cerebellum and the brain stem in adult mouse brain. In the hippocampus, expressed in the dentate gyrus, the hilus and the molecular layer.

Its subcellular location is the secreted. Hormone involved in different processes, such as regulation of the pH of the duodenal content, food intake and water homeostasis. Exerts its biological effects by binding to secretin receptor (SCTR), a G-protein coupled receptor expressed in the basolateral domain of several cells. Acts as a key gastrointestinal hormone by regulating the pH of the duodenal content. Secreted by S cells of the duodenum in the crypts of Lieberkuehn and regulates the pH of the duodenum by (1) inhibiting the secretion of gastric acid from the parietal cells of the stomach and (2) stimulating the production of bicarbonate (NaHCO(3)) from the ductal cells of the pancreas. Production of bicarbonate is essential to neutralize the pH and ensure no damage is done to the small intestine by the gastric acid. In addition to regulating the pH of the duodenal content, plays a central role in diet induced thermogenesis: acts as a non-sympathetic brown fat (BAT) activator mediating prandial thermogenesis, which consequentially induces satiation. Mechanistically, secretin released by the gut after a meal binds to secretin receptor (SCTR) in brown adipocytes, activating brown fat thermogenesis by stimulating lipolysis, which is sensed in the brain and promotes satiation. Also able to stimulate lipolysis in white adipocytes. Also plays an important role in cellular osmoregulation: released into the systemic circulation in response to hyperosmolality and acts at different levels in the hypothalamus, pituitary and kidney to regulate water homeostasis. Also plays a role in the central nervous system, possibly by acting as a neuropeptide hormone: required for hippocampal synaptic function and neural progenitor cells maintenance. In Mus musculus (Mouse), this protein is Secretin.